We begin with the raw amino-acid sequence, 406 residues long: Argininosuccinate synthase (406 aa).

ATP contacts are provided by residues 13-21 and alanine 40; that span reads AYSGGLDTS. 2 residues coordinate L-citrulline: tyrosine 91 and serine 96. ATP is bound at residue glycine 121. L-aspartate-binding residues include threonine 123, asparagine 127, and aspartate 128. Asparagine 127 contributes to the L-citrulline binding site. 5 residues coordinate L-citrulline: arginine 131, serine 182, serine 191, glutamate 267, and tyrosine 279.

The protein belongs to the argininosuccinate synthase family. Type 1 subfamily. As to quaternary structure, homotetramer.

The protein localises to the cytoplasm. The catalysed reaction is L-citrulline + L-aspartate + ATP = 2-(N(omega)-L-arginino)succinate + AMP + diphosphate + H(+). Its pathway is amino-acid biosynthesis; L-arginine biosynthesis; L-arginine from L-ornithine and carbamoyl phosphate: step 2/3. This chain is Argininosuccinate synthase, found in Brucella anthropi (strain ATCC 49188 / DSM 6882 / CCUG 24695 / JCM 21032 / LMG 3331 / NBRC 15819 / NCTC 12168 / Alc 37) (Ochrobactrum anthropi).